Here is a 146-residue protein sequence, read N- to C-terminus: Ribonuclease H (146 aa).

The RNase H type-1 domain occupies 1-143 (MQKKITIYTD…CDELARQAIQ (143 aa)). Residues D10, E48, D70, and D135 each contribute to the Mg(2+) site.

This sequence belongs to the RNase H family. In terms of assembly, monomer. It depends on Mg(2+) as a cofactor.

The protein resides in the cytoplasm. It carries out the reaction Endonucleolytic cleavage to 5'-phosphomonoester.. Functionally, endonuclease that specifically degrades the RNA of RNA-DNA hybrids. This chain is Ribonuclease H, found in Chlorobium luteolum (strain DSM 273 / BCRC 81028 / 2530) (Pelodictyon luteolum).